Reading from the N-terminus, the 490-residue chain is Tegument protein VP16 (490 aa).

Residues 12-35 (MNADGASPPPPRPAGGPKNTPAAP) form a disordered region. Residues S18, S353, S411, and S452 each carry the phosphoserine modification. Residues 411-490 (STAPPTDVSL…DALGIDEYGG (80 aa)) form a transcriptional activation region.

The protein belongs to the herpesviridae tegument protein VP16 protein family. Interacts with tegument protein VP22. Interacts with gH (via C-terminus). Interacts with the virion host shutoff protein (vhs). Interacts with VP11/12. Associates with the VP16-induced complex; binding to host HCFC1 activates VP16 for association with the octamer motif-binding host protein POU2F1, to form a multiprotein-DNA complex responsible for activating transcription of the viral immediate early genes. Interacts with host P-TEFb; this interaction recruits P-TEFb to the viral alpha-gene promoters and overcomes transcriptional inhibition by ICP22 and promotes transcription of IE genes.

Its subcellular location is the virion tegument. The protein resides in the host nucleus. Functionally, in the early stage of viral replication, acts as a transcriptional activator of immediate-early (IE) gene products (alpha-genes), which is released by invading virions. Recruits P-TEFb to the viral alpha-gene promoters and overcomes transcriptional inhibition by ICP22 to promote transcription of IE genes. VP16-induced complex represents a regulatory switch: when it is on, it promotes IE-gene expression and thus lytic infection, and when it is off, it limits IE-gene transcription favoring latent infection. Acts as a key activator of lytic infection by initiating the lytic program through the assembly of the transcriptional regulatory VP16-induced complex composed of VP16 and two cellular factors, HCFC1 and POU2F1. This complex recognizes the core motif 'TAATGARAT' in alpha-gene promoters. In the late stage of viral replication, VP16, as a tegument, is involved in viral assembly. In terms of biological role, may play a role in the aggregation of tegument proteins around nucleocapsids during virus morphogenesis. The chain is Tegument protein VP16 from Human herpesvirus 1 (strain 17) (HHV-1).